A 488-amino-acid polypeptide reads, in one-letter code: Protein DETOXIFICATION 35 (488 aa).

The next 12 helical transmembrane spans lie at 38–58 (LWMI…VSSV), 73–93 (AVSI…LGMG), 121–141 (IILF…TPVL), 150–170 (IAVP…SLAF), 187–207 (IAWI…LFII), 218–238 (LAFN…VIGW), 262–282 (IASA…IVLT), 296–316 (SICM…NAAI), 336–356 (VYVT…AIII), 379–401 (AYLL…VAVG), 408–428 (VAYI…YLLG), and 439–459 (WSGM…VLYK).

This sequence belongs to the multi antimicrobial extrusion (MATE) (TC 2.A.66.1) family. In terms of tissue distribution, highly expressed in inflorescence tissues, especially in floral epidermal guard cells including those of the anthers, stigma, siliques and nectaries. Also detected in the meristematic zone of the root apex and in the elongation zone through to the fully expanded cells of the differentiation zone.

The protein localises to the vacuole membrane. Its function is as follows. Multidrug and toxin efflux transporter involved in flavonoid metabolism. Required for proper reproductive development. This Arabidopsis thaliana (Mouse-ear cress) protein is Protein DETOXIFICATION 35.